The following is a 550-amino-acid chain: Phosphatidylinositol 4-kinase gamma 2 (550 aa).

Ubiquitin-like domains are found at residues 34 to 111 and 112 to 190; these read SVLV…YDPL and LVTV…VEDT. The disordered stretch occupies residues 228-247; sequence VDGLNKGSPPVRSAEGTGGT. In terms of domain architecture, PI3K/PI4K catalytic spans 234 to 532; sequence GSPPVRSAEG…SVLPASSEAT (299 aa). Residues 240 to 246 are G-loop; the sequence is SAEGTGG. ATP-binding positions include 241 to 247, lysine 263, and 359 to 362; these read AEGTGGT and QMFM. The interval 392 to 400 is catalytic loop; it reads ANADRHAGN. Residues 415-441 are activation loop; that stretch reads PIDHGYCLPENFEDCTFEWLYWPQAKL. Aspartate 417 lines the ATP pocket.

It belongs to the PI3/PI4-kinase family. Type II PI4K subfamily.

Its subcellular location is the membrane. It carries out the reaction a 1,2-diacyl-sn-glycero-3-phospho-(1D-myo-inositol) + ATP = a 1,2-diacyl-sn-glycero-3-phospho-(1D-myo-inositol 4-phosphate) + ADP + H(+). The phosphorylation of phosphatidylinositol (PI) to PI4P is the first committed step in the generation of phosphatidylinositol 4,5-bisphosphate (PIP2), a precursor of the second messenger inositol 1,4,5-trisphosphate (InsP3). The protein is Phosphatidylinositol 4-kinase gamma 2 (PI4KG2) of Arabidopsis thaliana (Mouse-ear cress).